The sequence spans 346 residues: N-acetyl-gamma-glutamyl-phosphate reductase (346 aa).

Residue Cys150 is part of the active site.

This sequence belongs to the NAGSA dehydrogenase family. Type 1 subfamily.

It localises to the cytoplasm. It carries out the reaction N-acetyl-L-glutamate 5-semialdehyde + phosphate + NADP(+) = N-acetyl-L-glutamyl 5-phosphate + NADPH + H(+). The protein operates within amino-acid biosynthesis; L-arginine biosynthesis; N(2)-acetyl-L-ornithine from L-glutamate: step 3/4. Catalyzes the NADPH-dependent reduction of N-acetyl-5-glutamyl phosphate to yield N-acetyl-L-glutamate 5-semialdehyde. The sequence is that of N-acetyl-gamma-glutamyl-phosphate reductase from Acetivibrio thermocellus (strain ATCC 27405 / DSM 1237 / JCM 9322 / NBRC 103400 / NCIMB 10682 / NRRL B-4536 / VPI 7372) (Clostridium thermocellum).